The following is a 287-amino-acid chain: MATKPQDANTTSREAITSKADSPPRPTALIFDSGVGGLSVYQEIRQLLPNLHYIYAFDNVAFPYGEKSGEFIVERVLEIVTAVQQRHPLAIVVIACNTASTVSLPALRERFAFPVVGVVPAIKPAVRLTRNGVVGLLATRATVHASYTLDLIARFATDCKIELLGSSELVEVAETKLHGGVVPLEVLKKILHPWLSMREPPDTIVLGCTHFPLLTEELAQVLPEGTRMVDSGAAIARRTAWLISSQENVVSSQDENIAYCMALDEDTDALLPVLQSYGFPKLQKLPI.

Residues 1 to 15 (MATKPQDANTTSREA) show a composition bias toward polar residues. The interval 1 to 25 (MATKPQDANTTSREAITSKADSPPR) is disordered. Residues 32–33 (DS) and 64–65 (YG) each bind substrate. Residue cysteine 96 is the Proton donor/acceptor of the active site. Substrate is bound at residue 97–98 (NT). The Proton donor/acceptor role is filled by cysteine 208. 209–210 (TH) is a substrate binding site.

It belongs to the aspartate/glutamate racemases family.

The catalysed reaction is L-glutamate = D-glutamate. Its pathway is cell wall biogenesis; peptidoglycan biosynthesis. Provides the (R)-glutamate required for cell wall biosynthesis. This chain is Glutamate racemase, found in Yersinia pseudotuberculosis serotype O:3 (strain YPIII).